Here is an 884-residue protein sequence, read N- to C-terminus: MEPSNTQKEDLPTAFNGIKSQLNSILKSNQLFQDYALLNGFLAFVHSKLNAAILTSIESQCGKSFAADLDSFDQSSISSILDFSWESVHYPIFKWFQMWRNYILFEKENKKQQTKFIDFRKMNSKMLKFFKTVQNFYVNVINTVYKKYDISVLLPKRIIQDLKLSDIENTTNVGDILAVKTFNSSSPLAHLIPTLFHRCLLFLGTAYRYKTLLEEISNKYSISNFKKSLDFFRLASLVLPSAGETYSQAGAIFLQTGNLGIAVFNFVKGMMTKMPSPVSIKNFGALMVDNKSSLNRSLHTTIMNTYLQESKGPRTPAKEILEFYFLGLFGSVWSPTSWRDDTKPNQLNNGIKLRHLENALYETMSARYLNNIKTIFHNLIITIGGFHLLLKRRSDVSAKTLKDLRSNELDYLNFAFKYIAHILNDIVKESWSENPEVSEILGMVRIINCWIKANPMVLQYSQSNLEFVNALAYLINDIVKKKPSPSFSITEHIPKRTYWFEEDLMVKGLSFVNFQLSDFDDYEKILEMDHSLDRLIGNPPLCDKLSASSEMLLRLQAVVNISSQLLQNNNCGVEWSDNKSRYIFNKKIGFKETVKNSMKTSKQSNEKAKLQRKNKPSTTNGSISMADLERQMRSSSLDSFSPTMGYSGSSVPMAPDTFNVKPSGTITGNKVNVELLKIELSGQNADGAITNISPGYSNAAISSSNSTDESSFDLNNILSSMQQKHAEKSFAKSMQGVNEQIPANDVCHQAQRPMQGGLYSSQQPSSMSSLNSAYQNASMPPSASMVSYPYPFLNQQGQGVFPPYNAQNLQWQSEAYSLKSMNFANPTWLGDQYQTSAPSSAYAQAQRQMFQQPMQQDVGKYMQFPFDAQSNTDSMRGNSRNNMF.

2 disordered regions span residues Asn596–Gly645 and Gln755–Tyr774. Over residues Arg633–Gly645 the composition is skewed to polar residues. Residues Ser760–Ser772 are compositionally biased toward low complexity.

It belongs to the EST1 family. As to quaternary structure, interacts with NMD helicase UPF1. Interacts with CDC33.

It localises to the nucleus. The protein localises to the chromosome. It is found in the telomere. Its subcellular location is the cytoplasm. The protein resides in the P-body. In terms of biological role, plays a role in nonsense-mediated mRNA decay (NMD). Recruits UPF1 to cytoplasmic mRNA decay bodies (P-bodies). Negative regulator of gene expression. Inhibits translation most likely through effects on eIF-4E (CDC33). Involved in telomere maintenance. The sequence is that of Nonsense-mediated mRNA decay factor EBS1 from Saccharomyces cerevisiae (strain ATCC 204508 / S288c) (Baker's yeast).